A 444-amino-acid polypeptide reads, in one-letter code: Ribosome biogenesis protein WDR12 homolog (444 aa).

Residues 7–87 form a ubiquitin-like (UBL) domain region; it reads VLVKFVTKLP…ESTLEVEYVP (81 aa). Residues 91–123 form a disordered region; sequence PPQQKNSTPHDDWVSSVDGSRCAPASSSGGSPS. WD repeat units follow at residues 105–148, 150–191, and 203–242; these read SSVD…VASV, AHAG…EEDA, and GHEDGVEAVAASPSGRRFASCGWDGKLLVWEGGEQLRWAA. Residues 243 to 264 are disordered; it reads GTAEASKKKRKTGTANGSAAAG. 4 WD repeats span residues 272 to 310, 312 to 352, 360 to 400, and 403 to 444; these read GHLHCVSSVAWPAENSLFSGGWDHSVRRWDVSSGAAADT, NGSK…GSDA, AHGG…PLGM, and HHTD…YIVS.

The protein belongs to the WD repeat WDR12/YTM1 family.

The protein localises to the nucleus. The protein resides in the nucleolus. Its subcellular location is the nucleoplasm. Required for maturation of ribosomal RNAs and formation of the large ribosomal subunit. The polypeptide is Ribosome biogenesis protein WDR12 homolog (Chlamydomonas reinhardtii (Chlamydomonas smithii)).